Here is a 307-residue protein sequence, read N- to C-terminus: UDP-3-O-acyl-N-acetylglucosamine deacetylase (307 aa).

Residues histidine 80, histidine 239, and aspartate 243 each coordinate Zn(2+). The active-site Proton donor is histidine 266.

It belongs to the LpxC family. It depends on Zn(2+) as a cofactor.

It catalyses the reaction a UDP-3-O-[(3R)-3-hydroxyacyl]-N-acetyl-alpha-D-glucosamine + H2O = a UDP-3-O-[(3R)-3-hydroxyacyl]-alpha-D-glucosamine + acetate. Its pathway is glycolipid biosynthesis; lipid IV(A) biosynthesis; lipid IV(A) from (3R)-3-hydroxytetradecanoyl-[acyl-carrier-protein] and UDP-N-acetyl-alpha-D-glucosamine: step 2/6. In terms of biological role, catalyzes the hydrolysis of UDP-3-O-myristoyl-N-acetylglucosamine to form UDP-3-O-myristoylglucosamine and acetate, the committed step in lipid A biosynthesis. The protein is UDP-3-O-acyl-N-acetylglucosamine deacetylase of Neisseria meningitidis serogroup A / serotype 4A (strain DSM 15465 / Z2491).